Here is a 59-residue protein sequence, read N- to C-terminus: UPF0434 protein Shew185_1670 (59 aa).

It belongs to the UPF0434 family.

The protein is UPF0434 protein Shew185_1670 of Shewanella baltica (strain OS185).